The following is a 574-amino-acid chain: Choline transporter-like protein ctl1 (574 aa).

N-linked (GlcNAc...) asparagine glycans are attached at residues asparagine 40 and asparagine 101. 8 helical membrane passes run 144-164 (WGLTFGFLTLALFTYSFLMVW), 189-209 (KDAIICMMLSVIWLFCLVAIP), 211-231 (FLYFLLASVPLTMFAFAVYLL), 246-266 (LMLLTGIILLVAPILLSYYVW), 291-311 (QITLIFISFLFSFYVLIFIWV), 336-356 (WVLASFYSLHFLWLCTFFHAL), 396-416 (YGLCAFSSFLVVITKVPLHFL), and 434-456 (TSASYVTSPLTLAYASIYSVPYM). N-linked (GlcNAc...) asparagine glycosylation is present at asparagine 457. A run of 2 helical transmembrane segments spans residues 485–505 (LLAARSLLAIGVGVTSWNYSI) and 511–531 (FYGYIVGLLGGFLAWLIIGAI). Residue asparagine 558 is glycosylated (N-linked (GlcNAc...) asparagine).

The protein belongs to the CTL (choline transporter-like) family. As to quaternary structure, interacts with atg9.

The protein resides in the endoplasmic reticulum membrane. The protein localises to the preautophagosomal structure membrane. Its function is as follows. Required for the normal organization of the preautophagosomal structure (PAS) and for the correct subcellular location of atg9. The polypeptide is Choline transporter-like protein ctl1 (ctl1) (Schizosaccharomyces pombe (strain 972 / ATCC 24843) (Fission yeast)).